The primary structure comprises 400 residues: General L-amino acid transport system permease protein AapQ (400 aa).

Helical transmembrane passes span 29–49 (SIFY…WVAH), 100–120 (LLVA…IGIG), 142–162 (IPPL…LPQP), 188–208 (TGMI…IIIA), 225–245 (VWTA…VSGF), 264–284 (VVGP…ASFI), 340–360 (NSSL…GTIL), and 367–387 (IEIV…TSLF). An ABC transmembrane type-1 domain is found at 96-388 (ILNTLLVAVT…SLSILTSLFM (293 aa)).

The protein belongs to the binding-protein-dependent transport system permease family. HisMQ subfamily.

The protein localises to the cell inner membrane. Functionally, part of a binding-protein-dependent transport system for L-amino acids, affects the uptake as well as efflux of these amino acids. Probably responsible for the translocation of the substrate across the membrane. The protein is General L-amino acid transport system permease protein AapQ (aapQ) of Rhizobium johnstonii (strain DSM 114642 / LMG 32736 / 3841) (Rhizobium leguminosarum bv. viciae).